Consider the following 149-residue polypeptide: MVSFFDIYTKASIVEAVRFSFLNTFQLKELGLPIKEIAVPLGTLVFLFVVIITLIPLLIIGNLIWTNLRLIERENTQQYQLVFGYSLIVSDIVGFAIVFFGAILGTNLKSVELFIALGWMMMLGSLIALGTTANLVSSIYLYIKLALKR.

The next 3 helical transmembrane spans lie at 39–61, 82–104, and 119–141; these read VPLGTLVFLFVVIITLIPLLIIG, VFGYSLIVSDIVGFAIVFFGAIL, and WMMMLGSLIALGTTANLVSSIYL.

It to M.pneumoniae MPN_090.

The protein resides in the cell membrane. This is an uncharacterized protein from Mycoplasma pneumoniae (strain ATCC 29342 / M129 / Subtype 1) (Mycoplasmoides pneumoniae).